The chain runs to 143 residues: MAKKITAYIKLQVKAAQANPSPPVGPALGQHGVNIMEFCKAFNARTQGLEPGLPTPVIITVYSDRSFTFETKSTPASVLLKKAAGLTSGSARPNTVKVGTVTRAQLEEIAKTKNADLTAADMDAAVRTIAGSARSMGLNVEGV.

The protein belongs to the universal ribosomal protein uL11 family. Part of the ribosomal stalk of the 50S ribosomal subunit. Interacts with L10 and the large rRNA to form the base of the stalk. L10 forms an elongated spine to which L12 dimers bind in a sequential fashion forming a multimeric L10(L12)X complex. In terms of processing, one or more lysine residues are methylated.

Forms part of the ribosomal stalk which helps the ribosome interact with GTP-bound translation factors. This chain is Large ribosomal subunit protein uL11, found in Pseudomonas fluorescens (strain SBW25).